The following is a 375-amino-acid chain: Aminomethyltransferase (375 aa).

Belongs to the GcvT family. The glycine cleavage system is composed of four proteins: P, T, L and H.

It catalyses the reaction N(6)-[(R)-S(8)-aminomethyldihydrolipoyl]-L-lysyl-[protein] + (6S)-5,6,7,8-tetrahydrofolate = N(6)-[(R)-dihydrolipoyl]-L-lysyl-[protein] + (6R)-5,10-methylene-5,6,7,8-tetrahydrofolate + NH4(+). The glycine cleavage system catalyzes the degradation of glycine. This chain is Aminomethyltransferase, found in Cupriavidus necator (strain ATCC 17699 / DSM 428 / KCTC 22496 / NCIMB 10442 / H16 / Stanier 337) (Ralstonia eutropha).